The chain runs to 363 residues: Chorismate synthase (363 aa).

Residues 36–58 are disordered; it reads SESDIQGDLDRRRPGQSKITTPR. Arginine 47 contacts NADP(+). FMN-binding positions include 124–126, glycine 286, 301–305, and arginine 327; these read RSS and KPTAT.

The protein belongs to the chorismate synthase family. In terms of assembly, homotetramer. Requires FMNH2 as cofactor.

The catalysed reaction is 5-O-(1-carboxyvinyl)-3-phosphoshikimate = chorismate + phosphate. It functions in the pathway metabolic intermediate biosynthesis; chorismate biosynthesis; chorismate from D-erythrose 4-phosphate and phosphoenolpyruvate: step 7/7. Its function is as follows. Catalyzes the anti-1,4-elimination of the C-3 phosphate and the C-6 proR hydrogen from 5-enolpyruvylshikimate-3-phosphate (EPSP) to yield chorismate, which is the branch point compound that serves as the starting substrate for the three terminal pathways of aromatic amino acid biosynthesis. This reaction introduces a second double bond into the aromatic ring system. This Crocosphaera subtropica (strain ATCC 51142 / BH68) (Cyanothece sp. (strain ATCC 51142)) protein is Chorismate synthase.